The primary structure comprises 385 residues: 3-hydroxyisobutyryl-CoA hydrolase, mitochondrial (385 aa).

The substrate site is built by E120, G145, E168, and D176.

The protein belongs to the enoyl-CoA hydratase/isomerase family.

It localises to the mitochondrion. The catalysed reaction is 3-hydroxy-2-methylpropanoyl-CoA + H2O = 3-hydroxy-2-methylpropanoate + CoA + H(+). The protein operates within amino-acid degradation; L-valine degradation. Its function is as follows. Hydrolyzes 3-hydroxyisobutyryl-CoA (HIBYL-CoA), a saline catabolite. Has high activity toward isobutyryl-CoA. Could be an isobutyryl-CoA dehydrogenase that functions in valine catabolism. Also hydrolyzes 3-hydroxypropanoyl-CoA. The protein is 3-hydroxyisobutyryl-CoA hydrolase, mitochondrial (HIBCH) of Gallus gallus (Chicken).